The following is a 299-amino-acid chain: N-acetylneuraminate lyase (299 aa).

Positions 45 and 46 each coordinate aceneuramate. Residue tyrosine 134 is the Proton donor of the active site. The Schiff-base intermediate with substrate role is filled by lysine 161. The aceneuramate site is built by threonine 163, glycine 185, aspartate 187, and glutamate 188.

It belongs to the DapA family. NanA subfamily. As to quaternary structure, homotetramer.

The protein resides in the cytoplasm. The enzyme catalyses aceneuramate = aldehydo-N-acetyl-D-mannosamine + pyruvate. It functions in the pathway amino-sugar metabolism; N-acetylneuraminate degradation; D-fructose 6-phosphate from N-acetylneuraminate: step 1/5. Functionally, catalyzes the reversible aldol cleavage of N-acetylneuraminic acid (sialic acid; Neu5Ac) to form pyruvate and N-acetylmannosamine (ManNAc) via a Schiff base intermediate. The sequence is that of N-acetylneuraminate lyase from Rhizobium meliloti (strain 1021) (Ensifer meliloti).